The chain runs to 84 residues: Small ribosomal subunit protein bS16 (84 aa).

The protein belongs to the bacterial ribosomal protein bS16 family.

The chain is Small ribosomal subunit protein bS16 from Ralstonia pickettii (strain 12J).